The primary structure comprises 291 residues: ATP synthase gamma chain (291 aa).

Belongs to the ATPase gamma chain family. F-type ATPases have 2 components, CF(1) - the catalytic core - and CF(0) - the membrane proton channel. CF(1) has five subunits: alpha(3), beta(3), gamma(1), delta(1), epsilon(1). CF(0) has three main subunits: a, b and c.

The protein resides in the cell inner membrane. In terms of biological role, produces ATP from ADP in the presence of a proton gradient across the membrane. The gamma chain is believed to be important in regulating ATPase activity and the flow of protons through the CF(0) complex. The polypeptide is ATP synthase gamma chain (Neisseria meningitidis serogroup C (strain 053442)).